The following is a 163-amino-acid chain: NAD(P)H-quinone oxidoreductase subunit I, chloroplastic (163 aa).

4Fe-4S ferredoxin-type domains follow at residues 55 to 84 and 95 to 124; these read GRIH…VDWR and LNYS…MTEE. The [4Fe-4S] cluster site is built by Cys64, Cys67, Cys70, Cys74, Cys104, Cys107, Cys110, and Cys114.

The protein belongs to the complex I 23 kDa subunit family. In terms of assembly, NDH is composed of at least 16 different subunits, 5 of which are encoded in the nucleus. [4Fe-4S] cluster is required as a cofactor.

It localises to the plastid. Its subcellular location is the chloroplast thylakoid membrane. It carries out the reaction a plastoquinone + NADH + (n+1) H(+)(in) = a plastoquinol + NAD(+) + n H(+)(out). The catalysed reaction is a plastoquinone + NADPH + (n+1) H(+)(in) = a plastoquinol + NADP(+) + n H(+)(out). Functionally, NDH shuttles electrons from NAD(P)H:plastoquinone, via FMN and iron-sulfur (Fe-S) centers, to quinones in the photosynthetic chain and possibly in a chloroplast respiratory chain. The immediate electron acceptor for the enzyme in this species is believed to be plastoquinone. Couples the redox reaction to proton translocation, and thus conserves the redox energy in a proton gradient. This is NAD(P)H-quinone oxidoreductase subunit I, chloroplastic (ndhI) from Phoenix dactylifera (Date palm).